The chain runs to 612 residues: Dihydroxy-acid dehydratase (612 aa).

Asp81 is a Mg(2+) binding site. Cys122 provides a ligand contact to [2Fe-2S] cluster. Mg(2+) is bound by residues Asp123 and Lys124. The residue at position 124 (Lys124) is an N6-carboxylysine. Cys193 contacts [2Fe-2S] cluster. Glu489 is a binding site for Mg(2+). The active-site Proton acceptor is the Ser515.

The protein belongs to the IlvD/Edd family. As to quaternary structure, homodimer. Requires [2Fe-2S] cluster as cofactor. Mg(2+) serves as cofactor.

It catalyses the reaction (2R)-2,3-dihydroxy-3-methylbutanoate = 3-methyl-2-oxobutanoate + H2O. The enzyme catalyses (2R,3R)-2,3-dihydroxy-3-methylpentanoate = (S)-3-methyl-2-oxopentanoate + H2O. Its pathway is amino-acid biosynthesis; L-isoleucine biosynthesis; L-isoleucine from 2-oxobutanoate: step 3/4. It functions in the pathway amino-acid biosynthesis; L-valine biosynthesis; L-valine from pyruvate: step 3/4. Functions in the biosynthesis of branched-chain amino acids. Catalyzes the dehydration of (2R,3R)-2,3-dihydroxy-3-methylpentanoate (2,3-dihydroxy-3-methylvalerate) into 2-oxo-3-methylpentanoate (2-oxo-3-methylvalerate) and of (2R)-2,3-dihydroxy-3-methylbutanoate (2,3-dihydroxyisovalerate) into 2-oxo-3-methylbutanoate (2-oxoisovalerate), the penultimate precursor to L-isoleucine and L-valine, respectively. The sequence is that of Dihydroxy-acid dehydratase from Xanthomonas campestris pv. campestris (strain B100).